The primary structure comprises 445 residues: MSNRKYFGTDGIRGRVGDAPITPDFVLKLGWAAGKVLARHGSRKIIIGKDTRISGYMLESALEAGLAAAGLSALFTGPMPTPAVAYLTRTFRAEAGIVISASHNPFYDNGIKFFSIDGTKLPDAVEEAIEAEMEKEISCVDSAELGKASRIVDAAGRYIEFCKATFPNELSLSELKIVVDCANGATYHIAPNVLRELGANVIAIGCEPNGVNINAEVGATDVRALQARVLAEKADLGIAFDGDGDRVIMVDHEGNKVDGDQIMYIIAREGLRQGQLRGGAVGTLMSNMGLELALKQLGIPFERAKVGDRYVLEKMQEKGWRIGAENSGHVILLDKTTTGDGIVAGLQVLAAMARNHMSLHDLCSGMKMFPQILVNVRYTAGSGDPLEHESVKAVTAEVEAALGSRGRVLLRKSGTEPLIRVMVEGEDEAQVTEFAHRIADAVKAV.

Serine 102 functions as the Phosphoserine intermediate in the catalytic mechanism. Residues serine 102, aspartate 241, aspartate 243, and aspartate 245 each coordinate Mg(2+). A Phosphoserine modification is found at serine 102.

Belongs to the phosphohexose mutase family. Requires Mg(2+) as cofactor. Post-translationally, activated by phosphorylation.

The enzyme catalyses alpha-D-glucosamine 1-phosphate = D-glucosamine 6-phosphate. Functionally, catalyzes the conversion of glucosamine-6-phosphate to glucosamine-1-phosphate. The chain is Phosphoglucosamine mutase from Escherichia coli O81 (strain ED1a).